Here is a 1642-residue protein sequence, read N- to C-terminus: Coiled-coil domain-containing protein 7A (1642 aa).

The tract at residues Pro21–Leu51 is disordered. An LRR 1 repeat occupies Val161–Ala184. A coiled-coil region spans residues Leu279–Glu330. An LRR 2 repeat occupies Ile1310–Thr1333.

As to expression, exclusively expressed in the testes.

In Mus musculus (Mouse), this protein is Coiled-coil domain-containing protein 7A.